The following is a 157-amino-acid chain: Small ribosomal subunit protein uS7 (157 aa).

It belongs to the universal ribosomal protein uS7 family. Part of the 30S ribosomal subunit. Contacts proteins S9 and S11.

Functionally, one of the primary rRNA binding proteins, it binds directly to 16S rRNA where it nucleates assembly of the head domain of the 30S subunit. Is located at the subunit interface close to the decoding center, probably blocks exit of the E-site tRNA. The protein is Small ribosomal subunit protein uS7 of Leptospira borgpetersenii serovar Hardjo-bovis (strain JB197).